The following is a 475-amino-acid chain: Ribulose bisphosphate carboxylase large chain (475 aa).

The propeptide occupies 1–2 (MS). N-acetylproline is present on Pro-3. An N6,N6,N6-trimethyllysine modification is found at Lys-14. Residues Asn-123 and Thr-173 each coordinate substrate. The active-site Proton acceptor is Lys-175. Lys-177 is a substrate binding site. Mg(2+) is bound by residues Lys-201, Asp-203, and Glu-204. Lys-201 carries the post-translational modification N6-carboxylysine. Residue His-294 is the Proton acceptor of the active site. Residues Arg-295, His-327, and Ser-379 each coordinate substrate.

The protein belongs to the RuBisCO large chain family. Type I subfamily. As to quaternary structure, heterohexadecamer of 8 large chains and 8 small chains; disulfide-linked. The disulfide link is formed within the large subunit homodimers. The cofactor is Mg(2+). Post-translationally, the disulfide bond which can form in the large chain dimeric partners within the hexadecamer appears to be associated with oxidative stress and protein turnover.

It localises to the plastid. It is found in the chloroplast. It carries out the reaction 2 (2R)-3-phosphoglycerate + 2 H(+) = D-ribulose 1,5-bisphosphate + CO2 + H2O. It catalyses the reaction D-ribulose 1,5-bisphosphate + O2 = 2-phosphoglycolate + (2R)-3-phosphoglycerate + 2 H(+). RuBisCO catalyzes two reactions: the carboxylation of D-ribulose 1,5-bisphosphate, the primary event in carbon dioxide fixation, as well as the oxidative fragmentation of the pentose substrate in the photorespiration process. Both reactions occur simultaneously and in competition at the same active site. This Plumbago auriculata (Cape leadwort) protein is Ribulose bisphosphate carboxylase large chain.